We begin with the raw amino-acid sequence, 25 residues long: Unknown protein 7 (25 aa).

Residues 1-25 are disordered; it reads MENGKVHVASMSGLSMPHMNEMLEK.

This chain is Unknown protein 7, found in Pseudotsuga menziesii (Douglas-fir).